The primary structure comprises 261 residues: Hydrolase in agr operon (261 aa).

The region spanning 1 to 239 is the CN hydrolase domain; the sequence is MKVQIYQLPI…ADILTVDLNL (239 aa). The active-site Proton acceptor is the E41. The active-site Proton donor is the K110. C146 (nucleophile) is an active-site residue.

Belongs to the carbon-nitrogen hydrolase superfamily. NIT1/NIT2 family.

The polypeptide is Hydrolase in agr operon (Staphylococcus aureus).